We begin with the raw amino-acid sequence, 276 residues long: Pantothenate synthetase (276 aa).

Met26–His33 lines the ATP pocket. His33 serves as the catalytic Proton donor. Gln57 serves as a coordination point for (R)-pantoate. Position 57 (Gln57) interacts with beta-alanine. Gly142–Asp145 is a binding site for ATP. Gln148 contributes to the (R)-pantoate binding site. ATP is bound by residues Ile171 and Lys179–Arg182.

The protein belongs to the pantothenate synthetase family. As to quaternary structure, homodimer.

The protein localises to the cytoplasm. It catalyses the reaction (R)-pantoate + beta-alanine + ATP = (R)-pantothenate + AMP + diphosphate + H(+). It participates in cofactor biosynthesis; (R)-pantothenate biosynthesis; (R)-pantothenate from (R)-pantoate and beta-alanine: step 1/1. Catalyzes the condensation of pantoate with beta-alanine in an ATP-dependent reaction via a pantoyl-adenylate intermediate. This Exiguobacterium sp. (strain ATCC BAA-1283 / AT1b) protein is Pantothenate synthetase.